The sequence spans 571 residues: Urease subunit alpha (571 aa).

In terms of domain architecture, Urease spans 133-571 (GGVDSHIHFI…LPLAQRYFLF (439 aa)). Ni(2+)-binding residues include histidine 138, histidine 140, and lysine 221. Position 221 is an N6-carboxylysine (lysine 221). Histidine 223 serves as a coordination point for substrate. Residues histidine 250 and histidine 276 each coordinate Ni(2+). Histidine 324 functions as the Proton donor in the catalytic mechanism. Position 364 (aspartate 364) interacts with Ni(2+).

The protein belongs to the metallo-dependent hydrolases superfamily. Urease alpha subunit family. In terms of assembly, heterotrimer of UreA (gamma), UreB (beta) and UreC (alpha) subunits. Three heterotrimers associate to form the active enzyme. The cofactor is Ni cation. In terms of processing, carboxylation allows a single lysine to coordinate two nickel ions.

The protein localises to the cytoplasm. It carries out the reaction urea + 2 H2O + H(+) = hydrogencarbonate + 2 NH4(+). It functions in the pathway nitrogen metabolism; urea degradation; CO(2) and NH(3) from urea (urease route): step 1/1. In Anaeromyxobacter sp. (strain Fw109-5), this protein is Urease subunit alpha.